We begin with the raw amino-acid sequence, 421 residues long: UDP-N-acetylglucosamine 1-carboxyvinyltransferase (421 aa).

22 to 23 lines the phosphoenolpyruvate pocket; sequence KN. Arginine 93 contacts UDP-N-acetyl-alpha-D-glucosamine. The active-site Proton donor is the cysteine 117. A 2-(S-cysteinyl)pyruvic acid O-phosphothioketal modification is found at cysteine 117. UDP-N-acetyl-alpha-D-glucosamine-binding positions include 122–126, aspartate 308, and valine 330; that span reads RPVDL.

It belongs to the EPSP synthase family. MurA subfamily.

It localises to the cytoplasm. It catalyses the reaction phosphoenolpyruvate + UDP-N-acetyl-alpha-D-glucosamine = UDP-N-acetyl-3-O-(1-carboxyvinyl)-alpha-D-glucosamine + phosphate. The protein operates within cell wall biogenesis; peptidoglycan biosynthesis. Functionally, cell wall formation. Adds enolpyruvyl to UDP-N-acetylglucosamine. The polypeptide is UDP-N-acetylglucosamine 1-carboxyvinyltransferase (Azotobacter vinelandii (strain DJ / ATCC BAA-1303)).